A 140-amino-acid chain; its full sequence is ATP synthase epsilon chain (140 aa).

This sequence belongs to the ATPase epsilon chain family. F-type ATPases have 2 components, CF(1) - the catalytic core - and CF(0) - the membrane proton channel. CF(1) has five subunits: alpha(3), beta(3), gamma(1), delta(1), epsilon(1). CF(0) has three main subunits: a, b and c.

The protein localises to the cell inner membrane. Produces ATP from ADP in the presence of a proton gradient across the membrane. In Herminiimonas arsenicoxydans, this protein is ATP synthase epsilon chain.